The primary structure comprises 302 residues: Ornithine carbamoyltransferase (302 aa).

Carbamoyl phosphate contacts are provided by residues 53-56 (STRT), Gln80, Arg104, and 131-134 (HPCQ). L-ornithine is bound by residues Asn162, Asp219, and 223–224 (SM). Carbamoyl phosphate is bound by residues 259-260 (CL) and Arg287.

The protein belongs to the aspartate/ornithine carbamoyltransferase superfamily. OTCase family.

It localises to the cytoplasm. The catalysed reaction is carbamoyl phosphate + L-ornithine = L-citrulline + phosphate + H(+). Its pathway is amino-acid biosynthesis; L-arginine biosynthesis; L-arginine from L-ornithine and carbamoyl phosphate: step 1/3. In terms of biological role, reversibly catalyzes the transfer of the carbamoyl group from carbamoyl phosphate (CP) to the N(epsilon) atom of ornithine (ORN) to produce L-citrulline. The sequence is that of Ornithine carbamoyltransferase from Hydrogenovibrio crunogenus (strain DSM 25203 / XCL-2) (Thiomicrospira crunogena).